We begin with the raw amino-acid sequence, 181 residues long: Peptide deformylase (181 aa).

Residues Cys-99 and His-141 each coordinate Fe cation. The active site involves Glu-142. Fe cation is bound at residue His-145.

This sequence belongs to the polypeptide deformylase family. Requires Fe(2+) as cofactor.

It catalyses the reaction N-terminal N-formyl-L-methionyl-[peptide] + H2O = N-terminal L-methionyl-[peptide] + formate. In terms of biological role, removes the formyl group from the N-terminal Met of newly synthesized proteins. Requires at least a dipeptide for an efficient rate of reaction. N-terminal L-methionine is a prerequisite for activity but the enzyme has broad specificity at other positions. This is Peptide deformylase from Chlamydia muridarum (strain MoPn / Nigg).